The chain runs to 547 residues: Chaperonin GroEL (547 aa).

Residues 30-33, lysine 51, 87-91, glycine 415, 479-481, and aspartate 495 contribute to the ATP site; these read TLGP, DGTTT, and NAA.

The protein belongs to the chaperonin (HSP60) family. In terms of assembly, forms a cylinder of 14 subunits composed of two heptameric rings stacked back-to-back. Interacts with the co-chaperonin GroES.

Its subcellular location is the cytoplasm. It carries out the reaction ATP + H2O + a folded polypeptide = ADP + phosphate + an unfolded polypeptide.. Its function is as follows. Together with its co-chaperonin GroES, plays an essential role in assisting protein folding. The GroEL-GroES system forms a nano-cage that allows encapsulation of the non-native substrate proteins and provides a physical environment optimized to promote and accelerate protein folding. The sequence is that of Chaperonin GroEL from Cupriavidus taiwanensis (strain DSM 17343 / BCRC 17206 / CCUG 44338 / CIP 107171 / LMG 19424 / R1) (Ralstonia taiwanensis (strain LMG 19424)).